The sequence spans 843 residues: MTVTTSTPSGGGAAAVPPEDLVTLTIDGAEISVPKGTLVIRAAEQLGIEIPRFCDHPLLDPAGACRQCIVEVEGQRKPMASCTITCTDGMVVKTQLTSPVAEKAQHGVMELLLINHPLDCPVCDKGGECPLQNQAMSHGQSDSRFEGKKRTYEKPVPISTQVLLDRERCVLCARCTRFSNQVAGDPMIELIERGALQQVGTGEGDPFESYFSGNTIQICPVGALTSAAYRFRSRPFDLISSPSVCEHCSGGCATRTDHRRGKVMRRLAANEPEVNEEWICDKGRFGFRYAQQRDRLTTPLVRNAEGELEPASWPEALQIAAQGLLASRGRTGVLTGGRLTVEDAYAYSKFARVALDTNDIDFRARVHSAEEADFLAAHVAGRGRDLGGSSRTESGGGAGVTYTSLEKAPAVLLVGFEAEEEAPGVFLRLRKAWRKHGQKVFSLATHATRGLEKAGGTLLPAAPGTETEWLDALASGVGLEEGGTQAAEALRAEGAVIVVGERLASVAGGLTSAVRTSAATGARLVWIPRRAGERGAIEAGALPSLLPGGRPATDPRAREEVAALWGLADLPHRYGRDTGEIVEAAARGELQALLVAGVEVADLPDPTRARAALDEAGFVVSLELRPSEVSERADVVLPVAAVAEKPGTFLNWEGRVRFFEAALKPDQMTRRLAPTDARVLQMLADAMDVHLGLPDLRTTRAEIDRLGAWDGPRAGEPLQTASALPRPAAGEAVLAGHRLLLDQGLLQQGDEALAGTRHAARARLSAATAAEAGVKDGDVLAVTGPAGAVELPLQVTEMPDRVVWLPLNSAGSGVASDAGVLPGTLVRIGPATPAGAAPKEVEA.

The region spanning 20–98 is the 2Fe-2S ferredoxin-type domain; that stretch reads DLVTLTIDGA…GMVVKTQLTS (79 aa). Residues Cys54, Cys65, Cys68, and Cys82 each contribute to the [2Fe-2S] cluster site. The 4Fe-4S His(Cys)3-ligated-type domain maps to 100–139; the sequence is VAEKAQHGVMELLLINHPLDCPVCDKGGECPLQNQAMSHG. [4Fe-4S] cluster-binding residues include His116, Cys120, Cys123, Cys129, Cys169, Cys172, Cys175, Cys219, Cys245, Cys248, Cys252, and Cys280. The region spanning 238-294 is the 4Fe-4S Mo/W bis-MGD-type domain; it reads LISSPSVCEHCSGGCATRTDHRRGKVMRRLAANEPEVNEEWICDKGRFGFRYAQQRD.

The protein belongs to the complex I 75 kDa subunit family. [2Fe-2S] cluster serves as cofactor. Requires [4Fe-4S] cluster as cofactor.

The catalysed reaction is a quinone + NADH + 5 H(+)(in) = a quinol + NAD(+) + 4 H(+)(out). Functionally, NDH-1 shuttles electrons from NADH, via FMN and iron-sulfur (Fe-S) centers, to quinones in the respiratory chain. Couples the redox reaction to proton translocation (for every two electrons transferred, four hydrogen ions are translocated across the cytoplasmic membrane), and thus conserves the redox energy in a proton gradient. In Streptomyces coelicolor (strain ATCC BAA-471 / A3(2) / M145), this protein is NADH-quinone oxidoreductase subunit G (nuoG).